A 217-amino-acid polypeptide reads, in one-letter code: Uridylate kinase (217 aa).

6–10 provides a ligand contact to ATP; it reads KLSGR. G38 is a UMP binding site. ATP is bound by residues G39 and R43. Residues D60 and 107-113 contribute to the UMP site; that span reads FQPGQST. 3 residues coordinate ATP: N134, Y139, and D142.

The protein belongs to the UMP kinase family. As to quaternary structure, homohexamer.

The protein localises to the cytoplasm. The enzyme catalyses UMP + ATP = UDP + ADP. The protein operates within pyrimidine metabolism; CTP biosynthesis via de novo pathway; UDP from UMP (UMPK route): step 1/1. Its activity is regulated as follows. Inhibited by UTP. Functionally, catalyzes the reversible phosphorylation of UMP to UDP. The sequence is that of Uridylate kinase from Pyrobaculum aerophilum (strain ATCC 51768 / DSM 7523 / JCM 9630 / CIP 104966 / NBRC 100827 / IM2).